A 402-amino-acid polypeptide reads, in one-letter code: MQEIEQRIYLAATYDTKGEEAEYLRQLLRRDGVMVVTVDVATSGQGSPAMVSAQEVAACYPQGAQAVFTGERGSAIVAMALAFERYLAGQRDVGAVLGIGGSGGTALVTPAMRALPVGVPKLMVSTMASGNVAPYVGPSDIAMMYSVTDVAGLNRISRRVLANAAGAIAGAFRQARQPIADDGRPAVGITMFGVTTPCVQHVTAALHDRYDCLVFHATGTGGQSMEKLADSGLLAGVLDLTTTEVCDFLFGGVLACTDDRFGAIARSGVPYVGSCGALDMVNFGALDTVPAACRERLLYPHNPQVTLMRTTAQENARQGAWIAERLNRCEGQVRFLIPEGGVSALDAPGQAFYDEAADAALFQALYDHVRQTDRRRLVRVPCHINDPLFARAAVEQFHEISQ.

The protein belongs to the UPF0261 family.

This Bordetella parapertussis (strain 12822 / ATCC BAA-587 / NCTC 13253) protein is UPF0261 protein BPP1817.